We begin with the raw amino-acid sequence, 62 residues long: Inner membrane protein p12 (62 aa).

A helical transmembrane segment spans residues 16 to 36 (LLIVAIVVVIMAIMLYYFWWM).

This sequence belongs to the asfivirus inner membrane protein p12 family. Homomultimer; disulfide-linked. Not glycosylated.

The protein resides in the virion membrane. In African swine fever virus (isolate Pig/Kenya/KEN-50/1950) (ASFV), this protein is Inner membrane protein p12.